The chain runs to 635 residues: Histone-lysine N-methyltransferase Su(var)3-9 (635 aa).

Positions Glu-81–Arg-188 are binds to Su(var)205 and Suvar(3)7. 2 disordered regions span residues Arg-123 to Gly-161 and Ser-191 to Ile-210. 2 stretches are compositionally biased toward low complexity: residues Pro-128–Ser-139 and Arg-147–Gly-161. The region spanning Tyr-219–Ala-278 is the Chromo domain. The region spanning Val-410–Gly-474 is the Pre-SET domain. Cys-412, Cys-414, Cys-421, Cys-427, Cys-428, Cys-456, Cys-460, Cys-462, and Cys-466 together coordinate Zn(2+). The SET domain occupies Val-477–Ile-603. S-adenosyl-L-methionine contacts are provided by residues Ser-488–Trp-490, Tyr-531, and Asn-560–His-561. Zn(2+)-binding residues include Cys-563, Cys-623, Cys-625, and Cys-630. The 17-residue stretch at Val-619–Phe-635 folds into the Post-SET domain.

It belongs to the class V-like SAM-binding methyltransferase superfamily. Histone-lysine methyltransferase family. Suvar3-9 subfamily. As to quaternary structure, interacts with Su(var)205 and Su(var)3-7. Probably associates with HDAC1/Rpd3. Interacts with Rrp6; the interaction promotes association of Rrp6 with a subset of genomic loci.

The protein localises to the nucleus. It localises to the chromosome. Its subcellular location is the centromere. The enzyme catalyses L-lysyl(9)-[histone H3] + 3 S-adenosyl-L-methionine = N(6),N(6),N(6)-trimethyl-L-lysyl(9)-[histone H3] + 3 S-adenosyl-L-homocysteine + 3 H(+). In terms of biological role, histone methyltransferase that specifically trimethylates 'Lys-9' of histone H3 using monomethylated H3 'Lys-9' as substrate. H3 'Lys-9' trimethylation represents a specific tag for epigenetic transcriptional repression by recruiting Su(var)205/HP1 to methylated histones. Mainly functions in heterochromatin regions, thereby playing a central role in the establishment of constitutive heterochromatin at pericentric regions. Involved in heterochromatic gene silencing including the modification of position-effect-variegation. In Drosophila melanogaster (Fruit fly), this protein is Histone-lysine N-methyltransferase Su(var)3-9 (Su(var)3-9).